Consider the following 178-residue polypeptide: Cytochrome b6-f complex iron-sulfur subunit (178 aa).

Residues 20-42 traverse the membrane as a helical segment; sequence LLTFGTATGVALGALYPVANYFM. The region spanning 65–161 is the Rieske domain; the sequence is KTGWLATHQA…VDIEDDAVLV (97 aa). Residues C107, H109, C125, and H128 each contribute to the [2Fe-2S] cluster site. A disulfide bridge links C112 with C127.

Belongs to the Rieske iron-sulfur protein family. In terms of assembly, the 4 large subunits of the cytochrome b6-f complex are cytochrome b6, subunit IV (17 kDa polypeptide, PetD), cytochrome f and the Rieske protein, while the 4 small subunits are PetG, PetL, PetM and PetN. The complex functions as a dimer. The cofactor is [2Fe-2S] cluster.

Its subcellular location is the cellular thylakoid membrane. The catalysed reaction is 2 oxidized [plastocyanin] + a plastoquinol + 2 H(+)(in) = 2 reduced [plastocyanin] + a plastoquinone + 4 H(+)(out). In terms of biological role, component of the cytochrome b6-f complex, which mediates electron transfer between photosystem II (PSII) and photosystem I (PSI), cyclic electron flow around PSI, and state transitions. The sequence is that of Cytochrome b6-f complex iron-sulfur subunit from Prochlorococcus marinus (strain MIT 9312).